Reading from the N-terminus, the 303-residue chain is Ornithine carbamoyltransferase (303 aa).

Carbamoyl phosphate contacts are provided by residues 52 to 55 (STRT), Gln-79, Arg-103, and 130 to 133 (HPCQ). Residues Asn-161, Asp-221, and 225-226 (SM) contribute to the L-ornithine site. Residues 260-261 (CL) and Arg-288 contribute to the carbamoyl phosphate site.

This sequence belongs to the aspartate/ornithine carbamoyltransferase superfamily. OTCase family.

The protein localises to the cytoplasm. The catalysed reaction is carbamoyl phosphate + L-ornithine = L-citrulline + phosphate + H(+). Its pathway is amino-acid biosynthesis; L-arginine biosynthesis; L-arginine from L-ornithine and carbamoyl phosphate: step 1/3. Reversibly catalyzes the transfer of the carbamoyl group from carbamoyl phosphate (CP) to the N(epsilon) atom of ornithine (ORN) to produce L-citrulline. This Rhizobium meliloti (strain 1021) (Ensifer meliloti) protein is Ornithine carbamoyltransferase (argF).